We begin with the raw amino-acid sequence, 83 residues long: MNNVLKFSALALAAVLATGCSSHSKETEARLTATEDAAARAQARADEAYRKADEALGAAQKAQQTADEANERALRMLEKASRK.

Positions 1–19 are cleaved as a signal peptide; that stretch reads MNNVLKFSALALAAVLATG. Cysteine 20 carries the N-palmitoyl cysteine lipid modification. Cysteine 20 carries S-diacylglycerol cysteine lipidation.

The protein localises to the cell outer membrane. The protein is Major outer membrane lipoprotein (oprI) of Pseudomonas aeruginosa (strain ATCC 15692 / DSM 22644 / CIP 104116 / JCM 14847 / LMG 12228 / 1C / PRS 101 / PAO1).